The following is a 353-amino-acid chain: Guanine nucleotide-binding protein subunit alpha (353 aa).

Residue G2 is the site of N-myristoyl glycine attachment. A lipid anchor (S-palmitoyl cysteine) is attached at C3. The region spanning 33-353 (NEIKMLLLGA…QLHLRECGLL (321 aa)) is the G-alpha domain. The segment at 36 to 49 (KMLLLGAGESGKST) is G1 motif. The GTP site is built by E44, S45, G46, K47, S48, T49, D150, L175, T181, G203, N269, K270, D272, and A325. S48 is a Mg(2+) binding site. The segment at 173–181 (DILRSRVKT) is G2 motif. A Mg(2+)-binding site is contributed by T181. A G3 motif region spans residues 196 to 205 (YKLFDVGGQR). The tract at residues 265–272 (ILFLNKID) is G4 motif. Positions 323–328 (TCATDT) are G5 motif.

This sequence belongs to the G-alpha family. G(q) subfamily. G proteins are composed of 3 units; alpha, beta and gamma. The alpha chain contains the guanine nucleotide binding site. Mg(2+) is required as a cofactor.

Guanine nucleotide-binding proteins (G proteins) are involved as modulators or transducers in various transmembrane signaling systems. The protein is Guanine nucleotide-binding protein subunit alpha (CGP1) of Coprinellus congregatus (Inky cap fungus).